The sequence spans 129 residues: N16.2 matrix protein (129 aa).

The signal sequence occupies residues 1-23; sequence MKCTLRWTITALVLLGICHLARP. 5 consecutive repeat copies span residues 91 to 92, 93 to 94, 95 to 96, 97 to 98, and 99 to 100. The segment at 91–100 is 5 X 2 AA tandem repeats of N-G; that stretch reads NGNGDGNGNG.

Belongs to the N16 matrix protein family. As to quaternary structure, heterooligomer; disulfide-linked. Pif97, Pif80, N16 and other proteins form a complex. Component of conchiolin, the organic matrix of nacre. Expressed at extremely high levels in the dorsal region of the mantle, which region may be responsible for the nacreous layer formation, but only in trace amounts at the mantle edge, which region may be responsible for the prismatic layer formation.

It is found in the secreted. It localises to the extracellular space. Its subcellular location is the extracellular matrix. Its function is as follows. May be specifically involved in the formation of the nacreous layer. This Pinctada fucata (Akoya pearl oyster) protein is N16.2 matrix protein.